Reading from the N-terminus, the 227-residue chain is 2,3-bisphosphoglycerate-dependent phosphoglycerate mutase (227 aa).

Substrate is bound by residues 7 to 14, 20 to 21, R59, 86 to 89, K97, 113 to 114, and 182 to 183; these read RHGLSEWN, TG, ERHY, RR, and GN. H8 functions as the Tele-phosphohistidine intermediate in the catalytic mechanism. Catalysis depends on E86, which acts as the Proton donor/acceptor.

The protein belongs to the phosphoglycerate mutase family. BPG-dependent PGAM subfamily. In terms of assembly, homodimer.

It catalyses the reaction (2R)-2-phosphoglycerate = (2R)-3-phosphoglycerate. It participates in carbohydrate degradation; glycolysis; pyruvate from D-glyceraldehyde 3-phosphate: step 3/5. Functionally, catalyzes the interconversion of 2-phosphoglycerate and 3-phosphoglycerate. This is 2,3-bisphosphoglycerate-dependent phosphoglycerate mutase from Mannheimia succiniciproducens (strain KCTC 0769BP / MBEL55E).